Consider the following 434-residue polypeptide: Protein ENHANCED PSEUDOMONAS SUSCEPTIBILITY 1 (434 aa).

Asp376 acts as the Proton acceptor in catalysis.

Belongs to the plant acyltransferase family.

Required for pathogen-induced salicylic acid (SA) accumulation and SA-mediated resistance to virulent and avirulent pathogens (e.g. P.syringae). The sequence is that of Protein ENHANCED PSEUDOMONAS SUSCEPTIBILITY 1 from Arabidopsis thaliana (Mouse-ear cress).